The sequence spans 160 residues: Cytochrome b6-f complex subunit 4 (160 aa).

Transmembrane regions (helical) follow at residues 36–56 (LLYTFPVCILGTIGCLVGLAV), 95–115 (LLGVVLMAGVPAGLLTVPFIE), and 131–151 (TVFLIGTVVAVWLGIGATLPI).

The protein belongs to the cytochrome b family. PetD subfamily. As to quaternary structure, the 4 large subunits of the cytochrome b6-f complex are cytochrome b6, subunit IV (17 kDa polypeptide, petD), cytochrome f and the Rieske protein, while the 4 small subunits are petG, petL, petM and petN. The complex functions as a dimer.

The protein resides in the plastid. It localises to the chloroplast thylakoid membrane. Component of the cytochrome b6-f complex, which mediates electron transfer between photosystem II (PSII) and photosystem I (PSI), cyclic electron flow around PSI, and state transitions. This is Cytochrome b6-f complex subunit 4 from Mesostigma viride (Green alga).